Here is a 443-residue protein sequence, read N- to C-terminus: MGKLLQLALHPDELASIVQFKLFRKNENARNPATESAELIRCYELLNLTSRSFAAVIEELHPELRNVIMVFYLVLRALDTVEVDMSIENSVKLPVLRQFHEKLDTKDWTFDGNSPNEKDRCVLVEFDRILGQYHELKPQYQKVIKEITEKMGNGMADYIENENFNSNGLLTIEDYDLYCYYVAGLVGDGLTQLIVLAKFGNSELSVNKQLFKSMGLFLQKTNIIRDYEEDQVDGRAFWPKEIWGKYANELSDFMKPENQSQGLWCISELVCNALDHVIDVLQYLALVEEQTSFNFCAIPQVMAIATLELVFQNPQVLTQHVKIRKGTTVSLILESRTLEGCARIFRRYLRKIHHKSHPSDPNYLRLGITIGKIEQFLDGMYPHYVPKGITPQTTSIRTQVVKRLQLDEPMKRDIDEEILKTRILLLSLGVAVFGVVYGVVRII.

A run of 2 helical transmembrane segments spans residues 291–311 and 423–443; these read TSFN…ELVF and ILLL…VRII.

The protein belongs to the phytoene/squalene synthase family. Mg(2+) serves as cofactor.

The protein resides in the endoplasmic reticulum membrane. It catalyses the reaction 2 (2E,6E)-farnesyl diphosphate + NADPH + H(+) = squalene + 2 diphosphate + NADP(+). It carries out the reaction 2 (2E,6E)-farnesyl diphosphate + NADH + H(+) = squalene + 2 diphosphate + NAD(+). The protein operates within terpene metabolism; lanosterol biosynthesis; lanosterol from farnesyl diphosphate: step 1/3. Functionally, catalyzes the condensation of 2 two farnesyl pyrophosphate moieties to form squalene. It is the first committed enzyme of the sterol biosynthesis pathway. Required for the biosynthesis of ergosterol. The chain is Squalene synthase (ERG9) from Cyberlindnera jadinii (Torula yeast).